Consider the following 95-residue polypeptide: Co-chaperonin GroES (95 aa).

It belongs to the GroES chaperonin family. Heptamer of 7 subunits arranged in a ring. Interacts with the chaperonin GroEL.

It is found in the cytoplasm. Its function is as follows. Together with the chaperonin GroEL, plays an essential role in assisting protein folding. The GroEL-GroES system forms a nano-cage that allows encapsulation of the non-native substrate proteins and provides a physical environment optimized to promote and accelerate protein folding. GroES binds to the apical surface of the GroEL ring, thereby capping the opening of the GroEL channel. The polypeptide is Co-chaperonin GroES (Desulforapulum autotrophicum (strain ATCC 43914 / DSM 3382 / VKM B-1955 / HRM2) (Desulfobacterium autotrophicum)).